The sequence spans 130 residues: UPF0251 protein Swol_2090 (130 aa).

Belongs to the UPF0251 family.

This Syntrophomonas wolfei subsp. wolfei (strain DSM 2245B / Goettingen) protein is UPF0251 protein Swol_2090.